The sequence spans 343 residues: Aspartate-semialdehyde dehydrogenase (343 aa).

11 to 14 (TGMV) contacts NADP(+). Residue Arg-109 coordinates phosphate. The Acyl-thioester intermediate role is filled by Cys-148. Gln-174 is a binding site for substrate. 177 to 178 (SG) provides a ligand contact to NADP(+). Glu-200 is a binding site for substrate. Lys-203 provides a ligand contact to phosphate. Arg-233 contributes to the substrate binding site. His-240 serves as the catalytic Proton acceptor. Residue 321-322 (NT) participates in NADP(+) binding.

It belongs to the aspartate-semialdehyde dehydrogenase family. Homodimer.

It carries out the reaction L-aspartate 4-semialdehyde + phosphate + NADP(+) = 4-phospho-L-aspartate + NADPH + H(+). The protein operates within amino-acid biosynthesis; L-lysine biosynthesis via DAP pathway; (S)-tetrahydrodipicolinate from L-aspartate: step 2/4. It functions in the pathway amino-acid biosynthesis; L-methionine biosynthesis via de novo pathway; L-homoserine from L-aspartate: step 2/3. It participates in amino-acid biosynthesis; L-threonine biosynthesis; L-threonine from L-aspartate: step 2/5. In terms of biological role, catalyzes the NADPH-dependent formation of L-aspartate-semialdehyde (L-ASA) by the reductive dephosphorylation of L-aspartyl-4-phosphate. The chain is Aspartate-semialdehyde dehydrogenase from Archaeoglobus fulgidus (strain ATCC 49558 / DSM 4304 / JCM 9628 / NBRC 100126 / VC-16).